A 376-amino-acid chain; its full sequence is uncharacterized protein (376 aa).

The protein belongs to the glycosyltransferase 28 family.

This is an uncharacterized protein from Methanosarcina mazei (strain ATCC BAA-159 / DSM 3647 / Goe1 / Go1 / JCM 11833 / OCM 88) (Methanosarcina frisia).